The primary structure comprises 329 residues: Biotin synthase (329 aa).

A Radical SAM core domain is found at 48-278 (FLGNGVDLCS…TKKIAVCGGR (231 aa)). 3 residues coordinate [4Fe-4S] cluster: Cys-66, Cys-70, and Cys-73. [2Fe-2S] cluster-binding residues include Ser-143 and Cys-203.

It belongs to the radical SAM superfamily. Biotin synthase family. Homodimer. [4Fe-4S] cluster serves as cofactor. It depends on [2Fe-2S] cluster as a cofactor.

The enzyme catalyses (4R,5S)-dethiobiotin + (sulfur carrier)-SH + 2 reduced [2Fe-2S]-[ferredoxin] + 2 S-adenosyl-L-methionine = (sulfur carrier)-H + biotin + 2 5'-deoxyadenosine + 2 L-methionine + 2 oxidized [2Fe-2S]-[ferredoxin]. It participates in cofactor biosynthesis; biotin biosynthesis; biotin from 7,8-diaminononanoate: step 2/2. Catalyzes the conversion of dethiobiotin (DTB) to biotin by the insertion of a sulfur atom into dethiobiotin via a radical-based mechanism. The protein is Biotin synthase of Geobacter metallireducens (strain ATCC 53774 / DSM 7210 / GS-15).